Here is a 451-residue protein sequence, read N- to C-terminus: Chromosomal replication initiator protein DnaA 2 (451 aa).

The interval 1 to 68 (MQAWEEFLKA…QQKFINGNNK (68 aa)) is domain I, interacts with DnaA modulators. Positions 68 to 104 (KRIKIHLSVANTPQRAKKTKTANKEKDFKAPFELTFD) are domain II. A domain III, AAA+ region region spans residues 105-326 (ELDPLCLFPY…KGLEALVLRL (222 aa)). ATP is bound by residues Gly-156, Gly-158, Lys-159, and Thr-160. The segment at 327–451 (HLDAKHSITA…CHIILKKLQG (125 aa)) is domain IV, binds dsDNA.

It belongs to the DnaA family. Oligomerizes as a right-handed, spiral filament on DNA at oriC.

It localises to the cytoplasm. Its function is as follows. Plays an essential role in the initiation and regulation of chromosomal replication. ATP-DnaA binds to the origin of replication (oriC) to initiate formation of the DNA replication initiation complex once per cell cycle. Binds the DnaA box (a 9 base pair repeat at the origin) and separates the double-stranded (ds)DNA. Forms a right-handed helical filament on oriC DNA; dsDNA binds to the exterior of the filament while single-stranded (ss)DNA is stabiized in the filament's interior. The ATP-DnaA-oriC complex binds and stabilizes one strand of the AT-rich DNA unwinding element (DUE), permitting loading of DNA polymerase. After initiation quickly degrades to an ADP-DnaA complex that is not apt for DNA replication. Binds acidic phospholipids. The protein is Chromosomal replication initiator protein DnaA 2 of Protochlamydia amoebophila (strain UWE25).